The primary structure comprises 334 residues: Glyceraldehyde-3-phosphate dehydrogenase (334 aa).

Residues 11-12 (RI), D33, and S119 each bind NAD(+). D-glyceraldehyde 3-phosphate contacts are provided by residues 149–151 (SCT) and T180. Residue C150 is the Nucleophile of the active site. N181 provides a ligand contact to NAD(+). D-glyceraldehyde 3-phosphate-binding positions include R197, 210–211 (TG), and R233. N314 contacts NAD(+).

The protein belongs to the glyceraldehyde-3-phosphate dehydrogenase family. In terms of assembly, homotetramer.

It localises to the cytoplasm. It carries out the reaction D-glyceraldehyde 3-phosphate + phosphate + NAD(+) = (2R)-3-phospho-glyceroyl phosphate + NADH + H(+). The protein operates within carbohydrate degradation; glycolysis; pyruvate from D-glyceraldehyde 3-phosphate: step 1/5. Its function is as follows. Catalyzes the oxidative phosphorylation of glyceraldehyde 3-phosphate (G3P) to 1,3-bisphosphoglycerate (BPG) using the cofactor NAD. The first reaction step involves the formation of a hemiacetal intermediate between G3P and a cysteine residue, and this hemiacetal intermediate is then oxidized to a thioester, with concomitant reduction of NAD to NADH. The reduced NADH is then exchanged with the second NAD, and the thioester is attacked by a nucleophilic inorganic phosphate to produce BPG. The sequence is that of Glyceraldehyde-3-phosphate dehydrogenase (gap) from Clostridium pasteurianum.